The primary structure comprises 228 residues: uncharacterized protein (228 aa).

One can recognise a Response regulatory domain in the interval 5–119 (HILIVEDEEK…ELLARIRAAL (115 aa)). Aspartate 54 carries the post-translational modification 4-aspartylphosphate. The segment at residues 130 to 228 (GTFLTYDDLR…IRGVGYAIKG (99 aa)) is a DNA-binding region (ompR/PhoB-type).

In terms of processing, phosphorylated by YkoH.

Its subcellular location is the cytoplasm. Functionally, probable member of the two-component regulatory system YkoH/YkoG. This is an uncharacterized protein from Bacillus subtilis (strain 168).